A 188-amino-acid polypeptide reads, in one-letter code: GTPase KRas (188 aa).

The residue at position 1 (Met-1) is an N-acetylmethionine. At Thr-2 the chain carries N-acetylthreonine; in GTPase KRas, N-terminally processed. GTP is bound by residues 10 to 18, 29 to 35, and 59 to 60; these read GAGGVGKSA, VDEYDPT, and AG. The Effector region motif lies at 32 to 40; it reads YDPTIEDSY. Lys-104 carries the N6-acetyllysine modification. A GTP-binding site is contributed by 116-119; it reads NKCD. The interval 166–185 is hypervariable region; that stretch reads HKEKMSKDGKKKKKKSKTKC. A disordered region spans residues 167–188; it reads KEKMSKDGKKKKKKSKTKCIIM. The residue at position 185 (Cys-185) is a Cysteine methyl ester. Cys-185 carries S-farnesyl cysteine lipidation. A propeptide spans 186 to 188 (removed in mature form); sequence IIM.

Belongs to the small GTPase superfamily. Ras family. Interacts with PHLPP. Interacts (active GTP-bound form preferentially) with RGS14. Interacts (when farnesylated) with PDE6D; this promotes dissociation from the cell membrane. Interacts with SOS1. Interacts (when farnesylated) with GPR31. Interacts with RAP1GDS1. Interacts (active GTP-bound form) with both SHOC2 and PP1c (all isoforms) to form a tertiary complex; SHOC2 and PP1c preferably bind M-Ras/MRAS, but they also bind K-Ras/KRAS, N-Ras/NRAS and H-Ras/HRAS. Interacts (GTP-bound form) with MAPKAP1/SIN1; inhibiting K-Ras/KRAS activity. In terms of processing, acetylation at Lys-104 prevents interaction with guanine nucleotide exchange factors (GEFs).

The protein localises to the cell membrane. It localises to the cytoplasm. The protein resides in the cytosol. It catalyses the reaction GTP + H2O = GDP + phosphate + H(+). With respect to regulation, alternates between an inactive form bound to GDP and an active form bound to GTP. Activated by a guanine nucleotide-exchange factor (GEF) and inactivated by a GTPase-activating protein (GAP). Interaction with SOS1 promotes exchange of bound GDP to GTP. In terms of biological role, ras proteins bind GDP/GTP and possess intrinsic GTPase activity. Plays an important role in the regulation of cell proliferation. Plays a role in promoting oncogenic events by inducing transcriptional silencing of tumor suppressor genes (TSGs) in colorectal cancer (CRC) cells in a ZNF304-dependent manner. This chain is GTPase KRas (KRAS), found in Monodelphis domestica (Gray short-tailed opossum).